The following is a 428-amino-acid chain: Stromal membrane-associated protein 2 (428 aa).

Positions 13 to 139 (QAVLANLLLE…INVLRKEKDD (127 aa)) constitute an Arf-GAP domain. Residues 28 to 51 (CADCQSKGPRWASWNIGVFICIRC) form a C4-type zinc finger. Phosphoserine is present on residues Ser127, Ser219, Ser224, Ser230, and Ser239. The interval 163 to 231 (MPQKKEDAQL…SVSRKAVGSM (69 aa)) is interaction with clathrin heavy chains. Residues 218–262 (PSPSSVSRKAVGSMPTAGSAGSVPENLNLFPEPGSKSEETGKKQL) form a disordered region. Over residues 252-262 (SKSEETGKKQL) the composition is skewed to basic and acidic residues. An interaction with PICALM region spans residues 339 to 428 (MGGMQASMMG…NQTLSPQMWK (90 aa)).

In terms of assembly, interacts with ARF1. Interacts with PICALM and clathrin heavy chains.

The protein resides in the cytoplasm. In terms of biological role, GTPase activating protein that acts on ARF1. Can also activate ARF6 (in vitro). May play a role in clathrin-dependent retrograde transport from early endosomes to the trans-Golgi network. This Mus musculus (Mouse) protein is Stromal membrane-associated protein 2 (Smap2).